The following is a 214-amino-acid chain: Probable nicotinate-nucleotide adenylyltransferase (214 aa).

The protein belongs to the NadD family.

It carries out the reaction nicotinate beta-D-ribonucleotide + ATP + H(+) = deamido-NAD(+) + diphosphate. The protein operates within cofactor biosynthesis; NAD(+) biosynthesis; deamido-NAD(+) from nicotinate D-ribonucleotide: step 1/1. In terms of biological role, catalyzes the reversible adenylation of nicotinate mononucleotide (NaMN) to nicotinic acid adenine dinucleotide (NaAD). The protein is Probable nicotinate-nucleotide adenylyltransferase of Psychromonas ingrahamii (strain DSM 17664 / CCUG 51855 / 37).